A 76-amino-acid chain; its full sequence is uncharacterized protein (76 aa).

This is an uncharacterized protein from Magallana gigas (Pacific oyster).